We begin with the raw amino-acid sequence, 558 residues long: NXPE family member 2 (558 aa).

A helical membrane pass occupies residues 17–37 (ASARKLFLIVLIIFVFWVVFM).

This sequence belongs to the NXPE family.

It is found in the membrane. This Mus musculus (Mouse) protein is NXPE family member 2 (Nxpe2).